We begin with the raw amino-acid sequence, 127 residues long: Major sperm protein 10/36/56/76 (127 aa).

A2 carries the N-acetylalanine modification. Residues 9-126 (DIQTQPNAKI…RRKNLPIEYN (118 aa)) enclose the MSP domain.

In terms of tissue distribution, sperm.

It localises to the cell projection. It is found in the pseudopodium. Its subcellular location is the cytoplasm. The protein resides in the cytoskeleton. In terms of biological role, central component in molecular interactions underlying sperm crawling. Forms an extensive filament system that extends from sperm villipoda, along the leading edge of the pseudopod. The polypeptide is Major sperm protein 10/36/56/76 (msp-10) (Caenorhabditis elegans).